The chain runs to 215 residues: Deoxyribose-phosphate aldolase (215 aa).

Asp89 functions as the Proton donor/acceptor in the catalytic mechanism. Catalysis depends on Lys150, which acts as the Schiff-base intermediate with acetaldehyde. Catalysis depends on Lys174, which acts as the Proton donor/acceptor.

It belongs to the DeoC/FbaB aldolase family. DeoC type 1 subfamily.

It localises to the cytoplasm. The catalysed reaction is 2-deoxy-D-ribose 5-phosphate = D-glyceraldehyde 3-phosphate + acetaldehyde. Its pathway is carbohydrate degradation; 2-deoxy-D-ribose 1-phosphate degradation; D-glyceraldehyde 3-phosphate and acetaldehyde from 2-deoxy-alpha-D-ribose 1-phosphate: step 2/2. Functionally, catalyzes a reversible aldol reaction between acetaldehyde and D-glyceraldehyde 3-phosphate to generate 2-deoxy-D-ribose 5-phosphate. This is Deoxyribose-phosphate aldolase from Natronomonas pharaonis (strain ATCC 35678 / DSM 2160 / CIP 103997 / JCM 8858 / NBRC 14720 / NCIMB 2260 / Gabara) (Halobacterium pharaonis).